A 154-amino-acid polypeptide reads, in one-letter code: 6,7-dimethyl-8-ribityllumazine synthase (154 aa).

Residues F22, 56 to 58 (AFE), and 81 to 83 (VLI) each bind 5-amino-6-(D-ribitylamino)uracil. 86-87 (ET) provides a ligand contact to (2S)-2-hydroxy-3-oxobutyl phosphate. H89 serves as the catalytic Proton donor. 5-amino-6-(D-ribitylamino)uracil is bound at residue L114. Residue R128 participates in (2S)-2-hydroxy-3-oxobutyl phosphate binding.

This sequence belongs to the DMRL synthase family.

The catalysed reaction is (2S)-2-hydroxy-3-oxobutyl phosphate + 5-amino-6-(D-ribitylamino)uracil = 6,7-dimethyl-8-(1-D-ribityl)lumazine + phosphate + 2 H2O + H(+). It functions in the pathway cofactor biosynthesis; riboflavin biosynthesis; riboflavin from 2-hydroxy-3-oxobutyl phosphate and 5-amino-6-(D-ribitylamino)uracil: step 1/2. Its function is as follows. Catalyzes the formation of 6,7-dimethyl-8-ribityllumazine by condensation of 5-amino-6-(D-ribitylamino)uracil with 3,4-dihydroxy-2-butanone 4-phosphate. This is the penultimate step in the biosynthesis of riboflavin. In Chlamydia pneumoniae (Chlamydophila pneumoniae), this protein is 6,7-dimethyl-8-ribityllumazine synthase.